We begin with the raw amino-acid sequence, 954 residues long: MWILESELFDGKRLWLRPGKTYLFGRTVAEAGQLTISDKTVSRKHLTIHIDNVPEGGGRNLRSRSNVIVEDLESKKGTLVNGVQIRGQKTTLTEDVNEIKLGLCPKTLKIRWHPIVLSFSFTSKELRADPWTNLRDSLEQLDIKYSAEYEPTTTHVVSKKRNTSKGLQALINGRYIVTDSFINAIVQATEIPEGEEGASSALEQDFEANWPNPLDHLPPRGEEPGNHTTETYAPDARRQEVFDGYTFIFYEKKQYDNLFPAISAGKGKALLKEVVPNRTRVDEFVRYVKSVAGEKGLGSFEDGSEGKGVVVVRYTPKGEDSAWYAEFFTKFAQQLDHRPIDQKEFLEAILACDASMLRRPLEAMSQPVSVSASVEPQSSEKVRPAVEDRKEVEQSAPKQLQPSAEVPATEESAPAPHRRERRTGRSRFKGFDFDDDDIIIETPQAQSSTQVPALPQVPSASQDSLFVSQREPSLAPSEPMLEEEAPCNTRTTRQTHRKRVLSPLPEHDNSALLDEIAPITAAVKRRRIEAGQDPVPPLPEPEPEREDEDVEMVEESPPRKGKKGAATTAKGKGKKIKQEDEENVLELARRRREEAEAAAAAERQRLAQLGDDDIDYAAIRRLHIIEEIEVRQPEPHGPNRTREQDIADGRWDPRWNGRKNFKRFRRQGETGVRMPVQSVIVPLEEVRTKEYGIGDDYWLEDEEGRVPRRPKETQTQERSTIGSVRDGSGFAAAAASGKGKEKDKENEKEVGRPGSSAAAAKQRSKPAPRRTVLTLDSSDEDEDEPSPHAPGIDTISDSEPEVVSSFPSVIPASEPSRSRAAKAAERANALRSSAHSSQSQTQQHRESQLSTGSSKIQLTLAPGSSSLSFSRSGTAAGRNENGKRPFGSFVSGESTASGRGMSVESGSVRGESASKRQKQGSSGGGSFLATRRKDDGSEEESEDDELKFRFGRRR.

One can recognise an FHA domain in the interval 22-85; it reads YLFGRTVAEA…KGTLVNGVQI (64 aa). BRCT domains lie at 107-186 and 244-349; these read TLKI…NAIV and GYTF…LEAI. Residues 368-377 are compositionally biased toward polar residues; it reads VSVSASVEPQ. 5 disordered regions span residues 368–431, 444–506, 528–580, 630–654, and 692–954; these read VSVS…FKGF, QAQS…PLPE, IEAG…KQED, VRQPEPHGPNRTREQDIADGRWDPR, and GIGD…GRRR. Basic and acidic residues predominate over residues 378–393; it reads SSEKVRPAVEDRKEVE. The span at 416–428 shows a compositional bias: basic residues; sequence PHRRERRTGRSRF. Residues 458-471 show a composition bias toward polar residues; that stretch reads PSASQDSLFVSQRE. Residues 541-554 show a composition bias toward acidic residues; that stretch reads PEPEREDEDVEMVE. 2 stretches are compositionally biased toward basic and acidic residues: residues 640-654 and 704-715; these read RTREQDIADGRWDPR and GRVPRRPKETQT. Positions 726–737 are enriched in low complexity; sequence DGSGFAAAAASG. The segment covering 738–751 has biased composition (basic and acidic residues); it reads KGKEKDKENEKEVG. Low complexity-rich tracts occupy residues 801-815 and 826-842; these read EVVSSFPSVIPASEP and RANALRSSAHSSQSQTQ. Acidic residues predominate over residues 936–945; sequence GSEEESEDDE.

The protein belongs to the Nibrin family. As to quaternary structure, component of the MRN complex composed of two heterodimers RAD50 and MRE11 associated with a single NBS1.

It localises to the nucleus. It is found in the chromosome. Functionally, component of the MRN complex, which plays a central role in double-strand break (DSB) repair, DNA recombination, maintenance of telomere integrity and meiosis. The MRN complex is involved in the repair of DNA double-strand breaks (DSBs) via homologous recombination (HR), an error-free mechanism which primarily occurs during S and G2 phases. The complex (1) mediates the end resection of damaged DNA, which generates proper single-stranded DNA, a key initial steps in HR, and is (2) required for the recruitment of other repair factors and efficient activation of ATM and ATR upon DNA damage. The MRN complex possesses single-strand endonuclease activity and double-strand-specific 3'-5' exonuclease activity, which are provided by MRE11, to initiate end resection, which is required for single-strand invasion and recombination. Within the MRN complex, NBS1 acts as a protein-protein adapter, which specifically recognizes and binds phosphorylated proteins, promoting their recruitment to DNA damage sites. Recruits MRE11 and RAD50 components of the MRN complex to DSBs in response to DNA damage. This Chaetomium thermophilum (strain DSM 1495 / CBS 144.50 / IMI 039719) (Thermochaetoides thermophila) protein is DNA repair and telomere maintenance protein NBS1.